The chain runs to 321 residues: Transaldolase (321 aa).

Lys132 acts as the Schiff-base intermediate with substrate in catalysis.

It belongs to the transaldolase family. Type 1 subfamily. Homodimer.

Its subcellular location is the cytoplasm. It carries out the reaction D-sedoheptulose 7-phosphate + D-glyceraldehyde 3-phosphate = D-erythrose 4-phosphate + beta-D-fructose 6-phosphate. The protein operates within carbohydrate degradation; pentose phosphate pathway; D-glyceraldehyde 3-phosphate and beta-D-fructose 6-phosphate from D-ribose 5-phosphate and D-xylulose 5-phosphate (non-oxidative stage): step 2/3. Transaldolase is important for the balance of metabolites in the pentose-phosphate pathway. This is Transaldolase from Marinobacter nauticus (strain ATCC 700491 / DSM 11845 / VT8) (Marinobacter aquaeolei).